Here is a 345-residue protein sequence, read N- to C-terminus: Anthranilate phosphoribosyltransferase (345 aa).

5-phospho-alpha-D-ribose 1-diphosphate contacts are provided by residues glycine 79, glycine 82–aspartate 83, threonine 87, asparagine 89–threonine 92, lysine 106–glycine 114, and serine 118. Glycine 79 provides a ligand contact to anthranilate. Serine 91 is a Mg(2+) binding site. Asparagine 109 is an anthranilate binding site. Arginine 164 provides a ligand contact to anthranilate. Aspartate 223 and glutamate 224 together coordinate Mg(2+).

It belongs to the anthranilate phosphoribosyltransferase family. As to quaternary structure, homodimer. Mg(2+) is required as a cofactor.

The enzyme catalyses N-(5-phospho-beta-D-ribosyl)anthranilate + diphosphate = 5-phospho-alpha-D-ribose 1-diphosphate + anthranilate. The protein operates within amino-acid biosynthesis; L-tryptophan biosynthesis; L-tryptophan from chorismate: step 2/5. Its function is as follows. Catalyzes the transfer of the phosphoribosyl group of 5-phosphorylribose-1-pyrophosphate (PRPP) to anthranilate to yield N-(5'-phosphoribosyl)-anthranilate (PRA). In Saccharolobus islandicus (strain M.14.25 / Kamchatka #1) (Sulfolobus islandicus), this protein is Anthranilate phosphoribosyltransferase.